The chain runs to 131 residues: Transcription antitermination protein NusB (131 aa).

This sequence belongs to the NusB family.

Its function is as follows. Involved in transcription antitermination. Required for transcription of ribosomal RNA (rRNA) genes. Binds specifically to the boxA antiterminator sequence of the ribosomal RNA (rrn) operons. The chain is Transcription antitermination protein NusB from Ligilactobacillus salivarius (strain UCC118) (Lactobacillus salivarius).